A 287-amino-acid polypeptide reads, in one-letter code: Pyridoxal kinase PdxY (287 aa).

Residues Ser9 and 44–45 (TQ) contribute to the substrate site. Asp111, Glu147, and Lys180 together coordinate ATP. Asp221 is a binding site for substrate.

This sequence belongs to the pyridoxine kinase family. PdxY subfamily. Homodimer. It depends on Mg(2+) as a cofactor.

It carries out the reaction pyridoxal + ATP = pyridoxal 5'-phosphate + ADP + H(+). The protein operates within cofactor metabolism; pyridoxal 5'-phosphate salvage; pyridoxal 5'-phosphate from pyridoxal: step 1/1. Functionally, pyridoxal kinase involved in the salvage pathway of pyridoxal 5'-phosphate (PLP). Catalyzes the phosphorylation of pyridoxal to PLP. The chain is Pyridoxal kinase PdxY from Paraburkholderia phymatum (strain DSM 17167 / CIP 108236 / LMG 21445 / STM815) (Burkholderia phymatum).